Reading from the N-terminus, the 433-residue chain is UDP-N-acetylglucosamine 1-carboxyvinyltransferase 1 (433 aa).

22-23 contributes to the phosphoenolpyruvate binding site; the sequence is KN. UDP-N-acetyl-alpha-D-glucosamine is bound at residue R95. The active-site Proton donor is the C119. C119 is modified (2-(S-cysteinyl)pyruvic acid O-phosphothioketal). UDP-N-acetyl-alpha-D-glucosamine contacts are provided by residues 124–128, D307, and V329; that span reads RPVDL.

This sequence belongs to the EPSP synthase family. MurA subfamily.

The protein resides in the cytoplasm. It carries out the reaction phosphoenolpyruvate + UDP-N-acetyl-alpha-D-glucosamine = UDP-N-acetyl-3-O-(1-carboxyvinyl)-alpha-D-glucosamine + phosphate. It participates in cell wall biogenesis; peptidoglycan biosynthesis. In terms of biological role, cell wall formation. Adds enolpyruvyl to UDP-N-acetylglucosamine. This is UDP-N-acetylglucosamine 1-carboxyvinyltransferase 1 from Latilactobacillus sakei subsp. sakei (strain 23K) (Lactobacillus sakei subsp. sakei).